We begin with the raw amino-acid sequence, 384 residues long: Protein V (384 aa).

2 disordered regions span residues 1–23 (MDQD…GGRE) and 38–317 (SEPT…TKKG). Basic and acidic residues predominate over residues 7 to 20 (ILKEDSEVEREAPG). The segment covering 50 to 59 (LHNTINTPQG) has biased composition (polar residues). Ser68 is subject to Phosphoserine; by host. Over residues 83-101 (RSGEESRVSGRTSKPEAEA) the composition is skewed to basic and acidic residues. Ser125 carries the phosphoserine; by host modification. Residues 150–168 (GIEDENREMAAHPDKRGED) show a composition bias toward basic and acidic residues. The segment covering 191-206 (ASNNGRSMEPGSSHSA) has biased composition (polar residues). Phosphoserine; by host is present on residues Ser192, Ser249, Ser257, and Ser260. Positions 318, 337, 341, 353, 355, 358, 362, and 365 each coordinate Zn(2+).

This sequence belongs to the paramyxoviruses V protein family. As to quaternary structure, interacts with host IFIH1/MDA5 and DHX58/LGP2. Interacts with host IRF3. Interacts with host RIGI regulatory protein (via CARDs domain) and host TRIM25 (via SPRY domain); these interactions prevent TRIM25-mediated ubiquitination of RIG-I and disrupts downstream RIG-I signaling.

Its subcellular location is the host cytoplasm. In terms of biological role, plays an essential role in the inhibition of host immune response. Prevents the establishment of cellular antiviral state by blocking interferon-alpha/beta (IFN-alpha/beta) production and signaling pathway. Interacts with host IFIH1/MDA5 and DHX58/LGP2 to inhibit the transduction pathway involved in the activation of IFN-beta promoter, thus protecting the virus against cell antiviral state. Also interacts with and inhibits host IRF3. Blocks the type I interferon signaling pathway by disrupting the RIG-I signaling pathway. This is Protein V (P/V/C) from Sendai virus (strain Z) (SeV).